We begin with the raw amino-acid sequence, 379 residues long: MEQLSTANTHFAVDLFRALNESDPTGNIFISPLSISSALAMIFLGTRGNTAAQVSKALYFDTVEDIHSRFQSLNADINKPGAPYILKLANRLYGEKTYNFLADFLASTQKMYGAELASVDFQQAPEDARKEINEWVKGQTEGKIPELLVKGMVDNMTKLVLVNAIYFKGNWQEKFMKEATRDAPFRLNKKDTKTVKMMYQKKKFPYNYIEDLKCRVLELPYQGKELSMIILLPDDIEDESTGLEKIEKQLTLEKLREWTKPENLYLAEVNVHLPRFKLEESYDLTSHLARLGVQDLFNRGKADLSGMSGARDLFVSKIIHKSFVDLNEEGTEAAAATAGTIMLAMLMPEENFNADHPFIFFIRHNPSANILFLGRFSSP.

Met1 carries the post-translational modification N-acetylmethionine. Lys137 and Lys177 each carry N6-acetyllysine. The segment at 351-379 is CARD-binding motif (CBM); that stretch reads NFNADHPFIFFIRHNPSANILFLGRFSSP.

The protein belongs to the serpin family. Ov-serpin subfamily. Monomer. Interacts (via C-terminus) with CASP1; CASP4 (via CARD domain) and CASP5; these interactions regulate the activity of inflammatory caspases. Interacts with PRTN3. Interacts with GZMH. Interacts with TMSB4. In terms of processing, the N-terminus is blocked.

It is found in the secreted. Its subcellular location is the cytoplasm. It localises to the cytolytic granule. The protein resides in the early endosome. In terms of biological role, neutrophil serine protease inhibitor that plays an essential role in the regulation of the innate immune response, inflammation and cellular homeostasis. Acts primarily to protect the cell from proteases released in the cytoplasm during stress or infection. These proteases are important in killing microbes but when released from granules, these potent enzymes also destroy host proteins and contribute to mortality. Regulates the activity of the neutrophil proteases elastase, cathepsin G, proteinase-3, chymase, chymotrypsin, and kallikrein-3. Also acts as a potent intracellular inhibitor of GZMH by directly blocking its proteolytic activity. During inflammation, limits the activity of inflammatory caspases CASP1, CASP4 and CASP5 by suppressing their caspase-recruitment domain (CARD) oligomerization and enzymatic activation. When secreted, promotes the proliferation of beta-cells via its protease inhibitory function. The chain is Leukocyte elastase inhibitor (SERPINB1) from Equus caballus (Horse).